A 300-amino-acid polypeptide reads, in one-letter code: Ribosomal RNA small subunit methyltransferase H (300 aa).

S-adenosyl-L-methionine is bound by residues Gly46–His48, Asp65, Phe92, Asp107, and Gln114.

It belongs to the methyltransferase superfamily. RsmH family.

It localises to the cytoplasm. The enzyme catalyses cytidine(1402) in 16S rRNA + S-adenosyl-L-methionine = N(4)-methylcytidine(1402) in 16S rRNA + S-adenosyl-L-homocysteine + H(+). Functionally, specifically methylates the N4 position of cytidine in position 1402 (C1402) of 16S rRNA. This Prochlorococcus marinus (strain MIT 9515) protein is Ribosomal RNA small subunit methyltransferase H.